The chain runs to 440 residues: tRNA modification GTPase MnmE (440 aa).

(6S)-5-formyl-5,6,7,8-tetrahydrofolate-binding residues include arginine 34, glutamate 94, and arginine 134. A TrmE-type G domain is found at 229–367 (GVRVVLAGPP…LVALLLDRAA (139 aa)). Asparagine 239 provides a ligand contact to K(+). GTP is bound by residues 239-244 (NAGKST), 258-264 (TPIAGTT), 283-286 (DTAG), and 348-350 (SAR). Serine 243 serves as a coordination point for Mg(2+). Threonine 258, isoleucine 260, and threonine 263 together coordinate K(+). Mg(2+) is bound at residue threonine 264. Lysine 440 provides a ligand contact to (6S)-5-formyl-5,6,7,8-tetrahydrofolate.

Belongs to the TRAFAC class TrmE-Era-EngA-EngB-Septin-like GTPase superfamily. TrmE GTPase family. Homodimer. Heterotetramer of two MnmE and two MnmG subunits. The cofactor is K(+).

It is found in the cytoplasm. In terms of biological role, exhibits a very high intrinsic GTPase hydrolysis rate. Involved in the addition of a carboxymethylaminomethyl (cmnm) group at the wobble position (U34) of certain tRNAs, forming tRNA-cmnm(5)s(2)U34. The sequence is that of tRNA modification GTPase MnmE from Rhizorhabdus wittichii (strain DSM 6014 / CCUG 31198 / JCM 15750 / NBRC 105917 / EY 4224 / RW1) (Sphingomonas wittichii).